Consider the following 332-residue polypeptide: MTVTISQVLRPRGPQIERLTENRAKVVLEPLGRGYAHTLGNALRRVLLSSIPGSAITQVEIDGVLHEYTTVEGLQEDVLEVLLNLKDVAIRIHSGDTATLSLFKQGAGVVTAADIKTDHNVEIINDGHVICHLTKDTTINMRLKVERGFGYQPAVVRRRPDDENRTIGRLILDASFSPVRRVAYVVEAARVEQRTDLDKLIIDIETNGTIDAEEALRTAADILTDQLSVFGDFTHRDRGTVKPASSGVDPVLLRPIDDLELTVRSANCLKAESIYYIGDLIQKTEVELLKTPNLGKKSLTEIKEVLGQRGLGLGVKLENWPPPGVSQYGMLG.

Positions Met1 to Thr234 are alpha N-terminal domain (alpha-NTD). Residues Val248–Gly332 are alpha C-terminal domain (alpha-CTD).

The protein belongs to the RNA polymerase alpha chain family. Homodimer. The RNAP catalytic core consists of 2 alpha, 1 beta, 1 beta' and 1 omega subunit. When a sigma factor is associated with the core the holoenzyme is formed, which can initiate transcription.

It catalyses the reaction RNA(n) + a ribonucleoside 5'-triphosphate = RNA(n+1) + diphosphate. Functionally, DNA-dependent RNA polymerase catalyzes the transcription of DNA into RNA using the four ribonucleoside triphosphates as substrates. This chain is DNA-directed RNA polymerase subunit alpha, found in Xylella fastidiosa (strain M12).